The sequence spans 245 residues: 1-(5-phosphoribosyl)-5-[(5-phosphoribosylamino)methylideneamino] imidazole-4-carboxamide isomerase (245 aa).

The Proton acceptor role is filled by D7. The active-site Proton donor is the D129.

It belongs to the HisA/HisF family.

The protein resides in the cytoplasm. It catalyses the reaction 1-(5-phospho-beta-D-ribosyl)-5-[(5-phospho-beta-D-ribosylamino)methylideneamino]imidazole-4-carboxamide = 5-[(5-phospho-1-deoxy-D-ribulos-1-ylimino)methylamino]-1-(5-phospho-beta-D-ribosyl)imidazole-4-carboxamide. It functions in the pathway amino-acid biosynthesis; L-histidine biosynthesis; L-histidine from 5-phospho-alpha-D-ribose 1-diphosphate: step 4/9. The chain is 1-(5-phosphoribosyl)-5-[(5-phosphoribosylamino)methylideneamino] imidazole-4-carboxamide isomerase from Psychromonas ingrahamii (strain DSM 17664 / CCUG 51855 / 37).